Here is a 128-residue protein sequence, read N- to C-terminus: LIM domain-containing protein 2 (128 aa).

An N-acetylmethionine modification is found at Met1. The tract at residues 1 to 25 (MFQAAGAAQATPSHEAKGGGSSSTV) is disordered. An LIM zinc-binding domain is found at 39–99 (ETCAACQKTV…KPHFQQLFKS (61 aa)). Cys41, Cys44, His62, Cys65, Cys68, Cys71, Cys89, and His92 together coordinate Zn(2+).

Interacts with ILK.

The protein resides in the cytoplasm. The protein localises to the nucleus. In terms of biological role, acts as an activator of the protein-kinase ILK, thereby regulating cell motility. This is LIM domain-containing protein 2 (LIMD2) from Bos taurus (Bovine).